A 42-amino-acid polypeptide reads, in one-letter code: Protein MGF 360-20R (42 aa).

It belongs to the asfivirus MGF 360 family.

Functionally, plays a role in virus cell tropism, and may be required for efficient virus replication in macrophages. The sequence is that of Protein MGF 360-20R from African swine fever virus (strain Badajoz 1971 Vero-adapted) (Ba71V).